Consider the following 444-residue polypeptide: Chitinase-like protein Idgf4 (444 aa).

An N-terminal signal peptide occupies residues 1 to 22; it reads MKLLLILLGALLAVLTIKRTSA. The 418-residue stretch at 27–444 folds into the GH18 domain; it reads NHLICYYDGT…ILRAIKFKFQ (418 aa). Cys-31 and Cys-58 are joined by a disulfide. Asn-226 carries N-linked (GlcNAc...) asparagine glycosylation. An intrachain disulfide couples Cys-345 to Cys-428.

The protein belongs to the glycosyl hydrolase 18 family. IDGF subfamily. Post-translationally, glycosylated.

It localises to the secreted. Functionally, cooperates with insulin-like peptides to stimulate the proliferation, polarization and motility of imaginal disk cells. May act by stabilizing the binding of insulin-like peptides to its receptor through a simultaneous interaction with both molecules to form a multiprotein signaling complex. The sequence is that of Chitinase-like protein Idgf4 (Idgf4) from Glossina morsitans morsitans (Savannah tsetse fly).